The chain runs to 316 residues: Probable cell division protein WhiA (316 aa).

A DNA-binding region (H-T-H motif) is located at residues 275–309 (TLKELGEMVASGKISKSGINHRLRKLDEIAEQLRT).

It belongs to the WhiA family.

The protein localises to the cytoplasm. Its subcellular location is the nucleoid. Involved in cell division and chromosome segregation. May influence the activity of FtsZ. Binds DNA, but does not seem to function as a transcription factor. The protein is Probable cell division protein WhiA of Bacillus subtilis (strain 168).